We begin with the raw amino-acid sequence, 209 residues long: Uracil phosphoribosyltransferase (209 aa).

Residues R79, R104, and 131–139 contribute to the 5-phospho-alpha-D-ribose 1-diphosphate site; that span reads DPMLATGGS. Residues I194 and 199-201 each bind uracil; that span reads GDA. Residue D200 participates in 5-phospho-alpha-D-ribose 1-diphosphate binding.

The protein belongs to the UPRTase family. Requires Mg(2+) as cofactor.

The catalysed reaction is UMP + diphosphate = 5-phospho-alpha-D-ribose 1-diphosphate + uracil. The protein operates within pyrimidine metabolism; UMP biosynthesis via salvage pathway; UMP from uracil: step 1/1. Its activity is regulated as follows. Allosterically activated by GTP. Functionally, catalyzes the conversion of uracil and 5-phospho-alpha-D-ribose 1-diphosphate (PRPP) to UMP and diphosphate. The protein is Uracil phosphoribosyltransferase of Listeria monocytogenes serovar 1/2a (strain ATCC BAA-679 / EGD-e).